An 88-amino-acid polypeptide reads, in one-letter code: Small ribosomal subunit protein uS15 (88 aa).

Belongs to the universal ribosomal protein uS15 family. Part of the 30S ribosomal subunit. Forms a bridge to the 50S subunit in the 70S ribosome, contacting the 23S rRNA.

Functionally, one of the primary rRNA binding proteins, it binds directly to 16S rRNA where it helps nucleate assembly of the platform of the 30S subunit by binding and bridging several RNA helices of the 16S rRNA. Forms an intersubunit bridge (bridge B4) with the 23S rRNA of the 50S subunit in the ribosome. The polypeptide is Small ribosomal subunit protein uS15 (Mycoplasmopsis pulmonis (strain UAB CTIP) (Mycoplasma pulmonis)).